A 1730-amino-acid chain; its full sequence is MEGKGTENPCSRTLGWFHQDNDAKPWLWKFSGCFSRPEQTLPLSSQTKEYMENKKAAVELKDIPSPLHVGSKFFPAVPLPDIRSLQQPKVQLSAIPKVSCCAHCPNEPSTSPMRFGGGSGSSGGSGSLIHTGSLLDSPSTGTVTCQVGSGFAFQSVSSLQNASTRNNLVGLSSDFPSMCVESNLPSCKHLSCCGKLHFQSCHSNVHKLHQFQNLQGCASAGYFPCSDFPSGAPGHLEERLSHSELTPHLCTNSLHLNVAPPVCLKGSLYCEDCLNKPARNSIIDAAKIWPNIPPPSTQPAPPAIPVCNGCGTKGMEKETSLLLATSLGKTASKFGSPEVAVTGQVLETLPPIGVFWDIENCSVPSGRSATTVVQRIREKFFRGHREAEFICVCDISKENKEVIQELNNCQVTVAHINATAKNAADDKLRQSLRRFANTHTAPATVVLVSTDVNFALELSDLRHRHGFHIILVHKNQASEALLHHANQLIRFEEFISDLPPRLPLKIPQCHTLLYVYNLPANKDGKSISNRLRRLSDNCGGKVLSITGCSAILRFINQDSAERAQKRMENEDVFGNRIIVSFTPKHREFFEAKSSNAIADKVKSPKKVKNTKLCLIKDTSEQSPSVKAMPGKVLQANSGSATKTTNIKSLQELCRMESKSGNRNSDHQQGHGRLAALPNSGPTASVPIVKNTGVTEPLYRSSQKKENPSSQSTVNSPVEKKKREETVFQVSYPSAFSKLIASRQVSPLLTSQSWSPRASPLAFNIANPSSGADCPDPFANGVDIQVSNVDYRLSRKELQQLLQEAFSKHGQVKSVELSPHTDYQLKAIVQMRNLHEAICAVNSLHRHKIGSKKILVSLSTGAANKSLSLLSTETMSILQDAPACCLPLFKFIDIYEKKYGHKLNVSDLYKLTDTIAIREQGNGRLVCLLPSNQARQSPLGSSQSHDGSSSNCSPVLFEELEYHEPVCKQHCSNKDFSELVFDPDSYKIPFVVLSLKVFAPQVHSLLQTHQGTVPLLSFPDCYAAEFGDLEITQDSHKGVPLEHFITCIPGVNIATAQNGVKVVKWIHNKPPPPNTDPWLLRSKSPVRNPQLIQFSREVIDLLKTQPSCILPVSNFIPSYHHHFGKQCRVSDYGYSKLIELLEAVPHVLQILGMGSKRLMTLTHRAQVKRFTQDLLKLLKSQASKQVIVRDFSQAYHWCFSKDWDVTEYGVCDLIDIISEIPDTTICLSQQDDDMVICIRKRERTQDEIERTKQFSKDVVDLLRHQPHFRMPFNKFIPSYHHHFGRQCKLAYYGFTKLLELLEAIPEILQVLECGEEKILTLTEVERFKALAAQFVKLLRSQKGNCLMMTDLFTEYAKTFGYTFRLQDYDVSSVSALTQKLCHVVKVADMESGKQIQLINRKSLRSLTAQLLVLLMSWEGDAYLPVDELRRHYETTHSTPLNPCEYGFMTLTELLKSLPYLVEVCTNDKAEEYVKLTSLYLFAKNVRSLLHTYHYQQIFLHEFSMAYNKYVGETLQPKTYGYSSVEELLGAIPQVVWIKGHGHKRIVVLKNDMKNRLSSFDLFSVNHEDQPAVSRQILAVPESHLASELQLRTGTGPSQMEQELLHLASSSPVDLLCAPVPSCLPSPQLRPDPVILKPADLIQFEEHPQEPLGVLVLNQEEKSEVPLPVQKGNLSCDSSPSSPAASPAPPGPSSEAPRPLFSKDAVESPAKKQPKNRVKLAANFSFAPVTKL.

Residue Ser-65 is modified to Phosphoserine. One can recognise an NYN domain in the interval 352–489 (IGVFWDIENC…ALLHHANQLI (138 aa)). Positions 655-668 (MESKSGNRNSDHQQ) are enriched in basic and acidic residues. The interval 655–722 (MESKSGNRNS…VNSPVEKKKR (68 aa)) is disordered. Phosphotyrosine is present on Tyr-698. One can recognise an RRM domain in the interval 781 to 860 (VDIQVSNVDY…KKILVSLSTG (80 aa)). HTH OST-type domains follow at residues 865–939 (SLSL…SPLG) and 993–1069 (SLKV…HNKP). Phosphoserine occurs at positions 1081 and 1083. HTH OST-type domains lie at 1089–1163 (QLIQ…LTHR), 1165–1241 (QVKR…RKRE), 1249–1324 (RTKQ…TEVE), 1325–1400 (RFKA…INRK), 1401–1475 (SLRS…VKLT), and 1476–1550 (SLYL…LKND). The tract at residues 1667–1714 (VQKGNLSCDSSPSSPAASPAPPGPSSEAPRPLFSKDAVESPAKKQPKN) is disordered. Ser-1684 carries the post-translational modification Phosphoserine.

Interacts with LIMK2. Predominantly present in oocytes and barely detectable in granulosa cells (at protein level).

Its subcellular location is the peroxisome. Essential regulator of oogenesis required for female meiotic progression to repress transposable elements and preventing their mobilization, which is essential for the germline integrity. Probably acts via some RNA metabolic process, equivalent to the piRNA system in males, which mediates the repression of transposable elements during meiosis by forming complexes composed of RNAs and governs the methylation and subsequent repression of transposons. Also required to protect from DNA double-strand breaks. The sequence is that of Meiosis regulator and mRNA stability factor 1 (Marf1) from Mus musculus (Mouse).